The following is a 233-amino-acid chain: Large ribosomal subunit protein uL1 (233 aa).

This sequence belongs to the universal ribosomal protein uL1 family. Part of the 50S ribosomal subunit.

Its function is as follows. Binds directly to 23S rRNA. The L1 stalk is quite mobile in the ribosome, and is involved in E site tRNA release. In terms of biological role, protein L1 is also a translational repressor protein, it controls the translation of the L11 operon by binding to its mRNA. The sequence is that of Large ribosomal subunit protein uL1 from Shewanella putrefaciens (strain CN-32 / ATCC BAA-453).